The chain runs to 113 residues: MHELSLCMSAADIIREQAEQHGIARVTDVWLEVGALADVEESALHFCFDIACRDTVAQGCTLHIDVIPAQAWCWDCSREAEIMQHAGCCPHCGSERLRITEGDDLRVKSLEGE.

Ni(2+) contacts are provided by His-2 and Glu-3. 4 residues coordinate Zn(2+): Cys-73, Cys-76, Cys-89, and Cys-92.

This sequence belongs to the HypA/HybF family. HybF subfamily.

Functionally, involved in the maturation of [NiFe] hydrogenases. Required for nickel insertion into the metal center of the hydrogenase. This is Hydrogenase maturation factor HybF from Klebsiella pneumoniae.